Reading from the N-terminus, the 292-residue chain is Non-homologous end joining protein Ku (292 aa).

In terms of domain architecture, Ku spans 9–187 (ITFGLVNVPV…TVPPITEREL (179 aa)). Positions 264–285 (AASAFPAAEKAPAGKNAATASA) are enriched in low complexity. Residues 264-292 (AASAFPAAEKAPAGKNAATASAKKARKLA) form a disordered region.

This sequence belongs to the prokaryotic Ku family. Homodimer. Interacts with LigD.

Functionally, with LigD forms a non-homologous end joining (NHEJ) DNA repair enzyme, which repairs dsDNA breaks with reduced fidelity. Binds linear dsDNA with 5'- and 3'- overhangs but not closed circular dsDNA nor ssDNA. Recruits and stimulates the ligase activity of LigD. The polypeptide is Non-homologous end joining protein Ku (Leifsonia xyli subsp. xyli (strain CTCB07)).